The chain runs to 201 residues: Ubiquinone biosynthesis accessory factor UbiJ (201 aa).

The SCP2 domain occupies 15-112 (LNTFLYRSPA…QVVQNFVALA (98 aa)).

It belongs to the UbiJ family.

The protein localises to the cytoplasm. It participates in cofactor biosynthesis; ubiquinone biosynthesis. In terms of biological role, required for ubiquinone (coenzyme Q) biosynthesis under aerobic conditions. Binds hydrophobic ubiquinone biosynthetic intermediates via its SCP2 domain and is essential for the stability of the Ubi complex. May constitute a docking platform where Ubi enzymes assemble and access their SCP2-bound polyprenyl substrates. Required for intracellular proliferation in macrophages. The polypeptide is Ubiquinone biosynthesis accessory factor UbiJ (Salmonella typhimurium (strain LT2 / SGSC1412 / ATCC 700720)).